A 347-amino-acid polypeptide reads, in one-letter code: Iron-sulfur cluster assembly protein SufC (347 aa).

Positions 100-346 (LEIKDLHAIE…ENKGYSQFLK (247 aa)) constitute an ABC transporter domain. Residue 134–141 (GRNGSGKS) participates in ATP binding.

Belongs to the ABC transporter superfamily. Ycf16 family. As to quaternary structure, component of a complex composed of SufB, SufC and SufD in a stoichiometric ratio of 1:2:1. Interacts with SufB. Interacts with SufD; the interaction enhances the ATPase activity of SufC. Proteolytically cleaved.

It localises to the plastid. The protein resides in the apicoplast. It carries out the reaction ATP + H2O = ADP + phosphate + H(+). It participates in cofactor biosynthesis; iron-sulfur cluster biosynthesis. Participates in the sulfur mobilization (SUF) pathway for iron-sulfur (Fe-S) cluster biogenesis. As part of a complex consisting of SufB-SufC(2)-SufD, involved in assembly of [4Fe-4S] clusters. Exhibits ATPase activity. This chain is Iron-sulfur cluster assembly protein SufC, found in Plasmodium falciparum (isolate 3D7).